The chain runs to 296 residues: GTPase Era (296 aa).

An Era-type G domain is found at 3–170 (KSGFVTIVGR…KELMFKYIPE (168 aa)). The G1 stretch occupies residues 11–18 (GRPNVGKS). 11-18 (GRPNVGKS) serves as a coordination point for GTP. The tract at residues 37–41 (QTTRN) is G2. Residues 58 to 61 (DTPG) form a G3 region. GTP contacts are provided by residues 58-62 (DTPGI) and 120-123 (NKID). Positions 120 to 123 (NKID) are G4. The interval 149–151 (ISA) is G5. Residues 201-278 (LSEEVPHGIA…YIRLWVKVKE (78 aa)) form the KH type-2 domain.

This sequence belongs to the TRAFAC class TrmE-Era-EngA-EngB-Septin-like GTPase superfamily. Era GTPase family. As to quaternary structure, monomer.

Its subcellular location is the cytoplasm. It is found in the cell membrane. An essential GTPase that binds both GDP and GTP, with rapid nucleotide exchange. Plays a role in 16S rRNA processing and 30S ribosomal subunit biogenesis and possibly also in cell cycle regulation and energy metabolism. This is GTPase Era from Clostridium botulinum (strain ATCC 19397 / Type A).